Here is a 492-residue protein sequence, read N- to C-terminus: T-box transcription factor TBX5-A (492 aa).

Residues 1 to 43 (MADSEDTFRLQNSPSDSEPKDLQNEGKSDKQNAAVSKSPSSQT) form a disordered region. The segment covering 17 to 30 (SEPKDLQNEGKSDK) has biased composition (basic and acidic residues). Residues 31–43 (QNAAVSKSPSSQT) are compositionally biased toward polar residues. Residues 62-237 (LWTKFHEVGT…NNPFAKGFRG (176 aa)) constitute a DNA-binding region (T-box). The disordered stretch occupies residues 331–352 (AGEHPYKKPYVESSSSEDDHYY).

As to quaternary structure, monomer. Homodimer (via the T-box); binds DNA as homodimer. In terms of tissue distribution, expressed in the dorsal optic cup of developing eye, pectoral fin buds and heart. At 31 hpf, when the pectoral fin buds have begun bulging outwards, restricted expression is detected throughout the mesenchyme of the early fin buds and these high levels of expression continue until later stages.

It localises to the nucleus. The protein resides in the cytoplasm. Functionally, required for pectoral fin formation. Together with tbx5b, involved in eye and heart development. Required for the looping stage of heart development. May bind to the core DNA motif of promoters. In Danio rerio (Zebrafish), this protein is T-box transcription factor TBX5-A (tbx5a).